The sequence spans 317 residues: Ribosome production factor 2 homolog (317 aa).

Positions 28–240 (KTAIFLRGNA…IRRVQPAESD (213 aa)) constitute a Brix domain. Residues 287–317 (MKGLKRSVEEREDSENEEVEIEEDVISDASE) form a disordered region. Phosphoserine occurs at positions 293, 300, 313, and 316. A compositionally biased stretch (acidic residues) spans 296-317 (EREDSENEEVEIEEDVISDASE).

The protein belongs to the RPF2 family. In terms of assembly, component of a hexameric 5S RNP precursor complex, composed of 5S RNA, rrs1, rpf2, rpl5a/rpl5b, rpl11a/rpl11b and syo1; this complex acts as a precursor for ribosome assembly.

It is found in the nucleus. It localises to the nucleolus. This is Ribosome production factor 2 homolog from Schizosaccharomyces pombe (strain 972 / ATCC 24843) (Fission yeast).